Consider the following 103-residue polypeptide: Putative membrane protein insertion efficiency factor (103 aa).

The protein belongs to the UPF0161 family.

The protein resides in the cell membrane. In terms of biological role, could be involved in insertion of integral membrane proteins into the membrane. The chain is Putative membrane protein insertion efficiency factor from Clavibacter sepedonicus (Clavibacter michiganensis subsp. sepedonicus).